The primary structure comprises 838 residues: Leucine--tRNA ligase (838 aa).

Residues 38 to 48 carry the 'HIGH' region motif; that stretch reads PYPSGKAHVGH. Positions 608 to 612 match the 'KMSKS' region motif; it reads KMSKS. K611 provides a ligand contact to ATP.

Belongs to the class-I aminoacyl-tRNA synthetase family.

It is found in the cytoplasm. It carries out the reaction tRNA(Leu) + L-leucine + ATP = L-leucyl-tRNA(Leu) + AMP + diphosphate. This chain is Leucine--tRNA ligase, found in Orientia tsutsugamushi (strain Boryong) (Rickettsia tsutsugamushi).